The primary structure comprises 134 residues: UPF0412 protein YaaI (134 aa).

The signal sequence occupies residues 1–23; it reads MKSVFTISASLAISLMLCCTAQA.

It belongs to the UPF0412 family.

This is UPF0412 protein YaaI from Shigella dysenteriae serotype 1 (strain Sd197).